The primary structure comprises 680 residues: MDFRQAQRNLELIEEVAKNSQDSDEPIIDEDDLKEGKVEEEGEGTQIPSMPFSDDDDSDNNSKDTFKETPLELVDKEEAIEDKAPNDDEPVVSVEEKIATQEPEPEEQIFMNTQIQGQLDDIEQEDNLRSKLSNFKYASEESSSVQVIKRSNERKLKSKKITKPKLTKTSKRTKTNSNPSTQQTLDEIKISRSENILKLLSGKHGKVKDMINHQRNVEKKVKLVKNKNSNIITYDTYNSEEWLRIMKLILEKFPSANDMEVKQVYHYIYGEEQEQEYDNLWEASQIPLASMREEAYNEDNQIDRKIPNIPNSTQTRVEVMSLSQVMDDVSIIEESKKTTIDSEREMHIYEVPDSTDDEDSRIIRVISGSDEVASIVAESEFSTETESTSTQFFTADGNMVDGVIDLTQGSFKAVTKLFSPLKVDTLLSINKNKEKVQVAVTRTSTRFSNLGSGPVGLEETPRLAPDEAATPPTVISRSPQSTRTPQATRLPNPNITVMYEVNKCELQSSNSYQSRSSEDIRIVNQYDIDVRDSQDEYDSATEKCLIEFAVTNSATPSVQPEDVMNVISSQSVQKLRQDLKTIGLKPVRTKAKMIEALMAASQVLDTDNVDQEQTREALYDQLTSMIKQIPELVSKISRFEPITMEELVLQLIEVNPFADHIDESTIKEWADIQGITLRNN.

3 disordered regions span residues 15 to 92, 141 to 183, and 450 to 490; these read EVAK…EPVV, ESSS…STQQ, and LGSG…ATRL. The segment covering 22–33 has biased composition (acidic residues); it reads DSDEPIIDEDDL. Over residues 60–86 the composition is skewed to basic and acidic residues; the sequence is NNSKDTFKETPLELVDKEEAIEDKAPN. Residues 156–174 show a composition bias toward basic residues; sequence LKSKKITKPKLTKTSKRTK. Over residues 473-490 the composition is skewed to polar residues; the sequence is TVISRSPQSTRTPQATRL.

It belongs to the SLX4 family. In terms of assembly, forms a heterodimer with SLX1. Phosphorylated in response to DNA damage.

Its subcellular location is the nucleus. In terms of biological role, regulatory subunit of the SLX1-SLX4 structure-specific endonuclease that resolves DNA secondary structures generated during DNA repair and recombination. Has endonuclease activity towards branched DNA substrates, introducing single-strand cuts in duplex DNA close to junctions with ss-DNA. The chain is Structure-specific endonuclease subunit SLX4 from Vanderwaltozyma polyspora (strain ATCC 22028 / DSM 70294 / BCRC 21397 / CBS 2163 / NBRC 10782 / NRRL Y-8283 / UCD 57-17) (Kluyveromyces polysporus).